The primary structure comprises 333 residues: Taste receptor type 2 member 110 (333 aa).

Topologically, residues 1–13 (MFSQIISTSDIFT) are extracellular. The chain crosses the membrane as a helical span at residues 14-34 (FTIILFVELVIGILGNGFIAL). Topologically, residues 35–60 (VNIMDWTKRRSISSADQILTALAITR) are cytoplasmic. Residues 61–81 (FLYVWFMIICILLFMLCPHLL) traverse the membrane as a helical segment. The Extracellular portion of the chain corresponds to 82–89 (TRSEIVTS). A helical membrane pass occupies residues 90–110 (IGIIWIVNNHFSVWLATCLGV). Over 111–133 (FYFLKIANFSNSLFLYLKWRVKK) the chain is Cytoplasmic. The helical transmembrane segment at 134–154 (VVLMIIQVSMIFLILNLLSLS) threads the bilayer. At 155–205 (MYDQFSIDVYEGNTSYNLGDSTPFPTISLFINSSKVFVITNSSHIFLPINS) the chain is on the extracellular side. Asparagine 186 and asparagine 195 each carry an N-linked (GlcNAc...) asparagine glycan. A helical transmembrane segment spans residues 206–226 (LFMLIPFTVSLVAFLMLIFSL). Topologically, residues 227-255 (WKHHKKMQVNAKPPRDASTMAHIKALQTG) are cytoplasmic. A helical membrane pass occupies residues 256-276 (FSFLLLYAVYLLFIVIGMLSL). At 277–283 (RLIGGKL) the chain is on the extracellular side. A helical transmembrane segment spans residues 284–304 (ILLFDHISGIGFPISHSFVLI). The Cytoplasmic segment spans residues 305-333 (LGNNKLRQASLSVLHCLRCRSKDMDTMGP).

This sequence belongs to the G-protein coupled receptor T2R family.

The protein localises to the membrane. Gustducin-coupled receptor implicated in the perception of bitter compounds in the oral cavity and the gastrointestinal tract. Signals through PLCB2 and the calcium-regulated cation channel TRPM5. This Mus musculus (Mouse) protein is Taste receptor type 2 member 110.